Here is a 315-residue protein sequence, read N- to C-terminus: MRRAKITIVGAGNVGATCAHWCAAAELGDVVLLDIPRTEDMPRGKALDLMQASPIMGFDSNIVGTTDYADTADSDVIVVTAGLPRKPGMSRDDLLATNAKIVTSVAEEIKATSPNAVIIVVSNPLDAMVQQMFKVTGFEPAKVIGQAGVLDTARYRTFLAMELGVSVEDISALLMGGHGDTMVPVPSCTSVGGIPVTQLISKERLDEIVDRTRKGGAEIVSLLKTGSAYYAPAAACAQMVEAIVKDKKRVIPVAAYCDSEYGVGGYYVGVPVVLGSGGVERIIELSLTDEETKAFQNSVDAVKSLVSTMDGLLAE.

NAD(+) contacts are provided by residues 10–15 (GAGNVG) and Asp34. The substrate site is built by Arg85 and Arg91. NAD(+) contacts are provided by residues Asn98 and 121-123 (VSN). Substrate is bound by residues Asn123 and Arg154. The active-site Proton acceptor is His178.

This sequence belongs to the LDH/MDH superfamily. MDH type 3 family.

It carries out the reaction (S)-malate + NAD(+) = oxaloacetate + NADH + H(+). Functionally, catalyzes the reversible oxidation of malate to oxaloacetate. The polypeptide is Malate dehydrogenase (Rhodopirellula baltica (strain DSM 10527 / NCIMB 13988 / SH1)).